The sequence spans 426 residues: Serine--tRNA ligase (426 aa).

Residue 233 to 235 (TAE) coordinates L-serine. 264–266 (RSE) is a binding site for ATP. Residue E287 participates in L-serine binding. Position 351–354 (351–354 (EISS)) interacts with ATP. S387 contributes to the L-serine binding site.

The protein belongs to the class-II aminoacyl-tRNA synthetase family. Type-1 seryl-tRNA synthetase subfamily. Homodimer. The tRNA molecule binds across the dimer.

The protein localises to the cytoplasm. It catalyses the reaction tRNA(Ser) + L-serine + ATP = L-seryl-tRNA(Ser) + AMP + diphosphate + H(+). The catalysed reaction is tRNA(Sec) + L-serine + ATP = L-seryl-tRNA(Sec) + AMP + diphosphate + H(+). The protein operates within aminoacyl-tRNA biosynthesis; selenocysteinyl-tRNA(Sec) biosynthesis; L-seryl-tRNA(Sec) from L-serine and tRNA(Sec): step 1/1. Functionally, catalyzes the attachment of serine to tRNA(Ser). Is also able to aminoacylate tRNA(Sec) with serine, to form the misacylated tRNA L-seryl-tRNA(Sec), which will be further converted into selenocysteinyl-tRNA(Sec). The polypeptide is Serine--tRNA ligase (Pseudomonas fluorescens (strain Pf0-1)).